We begin with the raw amino-acid sequence, 416 residues long: Major facilitator superfamily domain-containing protein 3 (416 aa).

The next 12 helical transmembrane spans lie at 10–30 (GLYL…PILL), 40–60 (VGLT…APLV), 68–88 (VWLT…AVLP), 99–119 (TTVM…DVAL), 139–158 (QVVA…LVFF), 170–190 (LTAT…LGRL), 204–224 (YLLQ…FVLT), 252–272 (LWSG…GGAL), 295–315 (LGGL…GASL), 324–344 (AALL…TATF), 365–385 (FLAT…GVLA), and 392–412 (LCFA…RLAP).

Belongs to the major facilitator superfamily.

It localises to the membrane. This is Major facilitator superfamily domain-containing protein 3 (Mfsd3) from Rattus norvegicus (Rat).